Reading from the N-terminus, the 349-residue chain is MSPNPSQQSSAVAFHPSAAPITLPESATWPLADVLALFELPFNDLMFQAQQTHRAHFPKGDVELATLLSIKTGGCEEDCSYCPQAARYDTGVEAQKILELEQVLDAAREARASGATRFCMGAAWRSPKERDLEKVEAMVRGVKQLGLETCATLGMLEEGQADRLKQAGLDYYNHNLDSAPEFYSNVISTREYQDRLDTLGRVRQAGLKICCGGIVGMGESRQQRAGLIAQLANLNPYPESVPVNHLVQVEGTPLYGIEPLDPIEFVRTIAVARITMPKARVRLSAGRRQMGDAVQAMCFLAGANSIFYGDKLLTTGNPEAGDDLALLAKLGLKTHASTLTEAQKERCGG.

In terms of domain architecture, Radical SAM core spans 60 to 287; it reads GDVELATLLS…KARVRLSAGR (228 aa). [4Fe-4S] cluster is bound by residues Cys-75, Cys-79, and Cys-82. [2Fe-2S] cluster is bound by residues Cys-119, Cys-150, Cys-210, and Arg-282.

It belongs to the radical SAM superfamily. Biotin synthase family. In terms of assembly, homodimer. Requires [4Fe-4S] cluster as cofactor. It depends on [2Fe-2S] cluster as a cofactor.

The enzyme catalyses (4R,5S)-dethiobiotin + (sulfur carrier)-SH + 2 reduced [2Fe-2S]-[ferredoxin] + 2 S-adenosyl-L-methionine = (sulfur carrier)-H + biotin + 2 5'-deoxyadenosine + 2 L-methionine + 2 oxidized [2Fe-2S]-[ferredoxin]. It functions in the pathway cofactor biosynthesis; biotin biosynthesis; biotin from 7,8-diaminononanoate: step 2/2. In terms of biological role, catalyzes the conversion of dethiobiotin (DTB) to biotin by the insertion of a sulfur atom into dethiobiotin via a radical-based mechanism. In Albidiferax ferrireducens (strain ATCC BAA-621 / DSM 15236 / T118) (Rhodoferax ferrireducens), this protein is Biotin synthase.